A 330-amino-acid polypeptide reads, in one-letter code: MKKVYYDQDANLELLREKKIAIIGYGSQGHAQAQNLKDSGLNVVVGLHKKSKSREKAEADGFTVMKVDEAAQWADIIQILVPDQIQGELYRDKIEEHLKPGKALMFSHGFNIHYGQIVPPPDVDVFLVAPKSPGHLVRRMYLEGKGVPGLIAVYQDATGKAKDLALAYAKGIGCTRAGVFETTFKEETETDLFGEQAVLCGGVTHLIKAGFETLVEAGYAPEMAYFECLHEMKLIVDLIYEGGFSLMRYSISDTAEYGDYMVGPRIITEETKKEMKKVLEEIQNGTFAKNWILENMAGRPVYNAIKRREQEHLIEKVGAELRQMMPWLKK.

The KARI N-terminal Rossmann domain occupies 1–182; sequence MKKVYYDQDA…GCTRAGVFET (182 aa). NADP(+)-binding positions include 25-28, S51, S53, and 83-86; these read YGSQ and DQIQ. The active site involves H108. G134 lines the NADP(+) pocket. Residues 183 to 328 form the KARI C-terminal knotted domain; sequence TFKEETETDL…AELRQMMPWL (146 aa). D191, E195, E227, and E231 together coordinate Mg(2+). A substrate-binding site is contributed by S252.

This sequence belongs to the ketol-acid reductoisomerase family. Mg(2+) is required as a cofactor.

It catalyses the reaction (2R)-2,3-dihydroxy-3-methylbutanoate + NADP(+) = (2S)-2-acetolactate + NADPH + H(+). The enzyme catalyses (2R,3R)-2,3-dihydroxy-3-methylpentanoate + NADP(+) = (S)-2-ethyl-2-hydroxy-3-oxobutanoate + NADPH + H(+). Its pathway is amino-acid biosynthesis; L-isoleucine biosynthesis; L-isoleucine from 2-oxobutanoate: step 2/4. The protein operates within amino-acid biosynthesis; L-valine biosynthesis; L-valine from pyruvate: step 2/4. Functionally, involved in the biosynthesis of branched-chain amino acids (BCAA). Catalyzes an alkyl-migration followed by a ketol-acid reduction of (S)-2-acetolactate (S2AL) to yield (R)-2,3-dihydroxy-isovalerate. In the isomerase reaction, S2AL is rearranged via a Mg-dependent methyl migration to produce 3-hydroxy-3-methyl-2-ketobutyrate (HMKB). In the reductase reaction, this 2-ketoacid undergoes a metal-dependent reduction by NADPH to yield (R)-2,3-dihydroxy-isovalerate. In Carboxydothermus hydrogenoformans (strain ATCC BAA-161 / DSM 6008 / Z-2901), this protein is Ketol-acid reductoisomerase (NADP(+)).